Reading from the N-terminus, the 1454-residue chain is Probable cleavage and polyadenylation specificity factor subunit 1 (1454 aa).

The disordered stretch occupies residues 810-843 (EEKEKKAKQTAAQEKEKETEKKKDDAKNEEDQVN). Over residues 812 to 843 (KEKKAKQTAAQEKEKETEKKKDDAKNEEDQVN) the composition is skewed to basic and acidic residues.

It belongs to the CPSF1 family. As to quaternary structure, CPSF is a heterotetramer composed of four distinct subunits 160 (cpsf-1), 100 (cpsf-2), 70 (cpsf-3), and 30 kDa (cpsf-4).

Its subcellular location is the nucleus. Functionally, CPSF plays a key role in pre-mRNA 3'-end formation, recognizing the AAUAAA signal sequence and interacting with poly(A)polymerase and other factors to bring about cleavage and poly(A) addition. This subunit is involved in the RNA recognition step of the polyadenylation reaction. This Caenorhabditis briggsae protein is Probable cleavage and polyadenylation specificity factor subunit 1.